Reading from the N-terminus, the 199-residue chain is Pyrrolidone-carboxylate peptidase (199 aa).

Residues E80, C142, and H166 contribute to the active site.

Belongs to the peptidase C15 family. As to quaternary structure, homotetramer.

Its subcellular location is the cytoplasm. The catalysed reaction is Release of an N-terminal pyroglutamyl group from a polypeptide, the second amino acid generally not being Pro.. Its function is as follows. Removes 5-oxoproline from various penultimate amino acid residues except L-proline. This chain is Pyrrolidone-carboxylate peptidase, found in Oceanobacillus iheyensis (strain DSM 14371 / CIP 107618 / JCM 11309 / KCTC 3954 / HTE831).